The chain runs to 342 residues: Phosphoribosylformylglycinamidine cyclo-ligase (342 aa).

This sequence belongs to the AIR synthase family.

It is found in the cytoplasm. It carries out the reaction 2-formamido-N(1)-(5-O-phospho-beta-D-ribosyl)acetamidine + ATP = 5-amino-1-(5-phospho-beta-D-ribosyl)imidazole + ADP + phosphate + H(+). It functions in the pathway purine metabolism; IMP biosynthesis via de novo pathway; 5-amino-1-(5-phospho-D-ribosyl)imidazole from N(2)-formyl-N(1)-(5-phospho-D-ribosyl)glycinamide: step 2/2. The protein is Phosphoribosylformylglycinamidine cyclo-ligase of Staphylococcus saprophyticus subsp. saprophyticus (strain ATCC 15305 / DSM 20229 / NCIMB 8711 / NCTC 7292 / S-41).